Reading from the N-terminus, the 376-residue chain is 26S proteasome non-ATPase regulatory subunit 13 (376 aa).

One can recognise a PCI domain in the interval 171-338; sequence SYYKDALRFL…KRVHMTWVQP (168 aa).

Component of the 19S proteasome regulatory particle complex. The 26S proteasome consists of a 20S core particle (CP) and two 19S regulatory subunits (RP). The regulatory particle is made of a lid composed of 9 subunits including PSMD13, a base containing 6 ATPases and few additional components.

Component of the 26S proteasome, a multiprotein complex involved in the ATP-dependent degradation of ubiquitinated proteins. This complex plays a key role in the maintenance of protein homeostasis by removing misfolded or damaged proteins, which could impair cellular functions, and by removing proteins whose functions are no longer required. Therefore, the proteasome participates in numerous cellular processes, including cell cycle progression, apoptosis, or DNA damage repair. In Gallus gallus (Chicken), this protein is 26S proteasome non-ATPase regulatory subunit 13.